Consider the following 399-residue polypeptide: Subtilisin-like protease CPC735_033790 (399 aa).

The first 20 residues, 1–20, serve as a signal peptide directing secretion; that stretch reads MGFLSSAILLLITAFPAAQA. A propeptide spanning residues 21–117 is cleaved from the precursor; it reads GEMINAAAGA…VEPDRMVNIT (97 aa). An Inhibitor I9 domain is found at 37–116; it reads SYIVVMNEGI…YVEPDRMVNI (80 aa). N-linked (GlcNAc...) asparagine glycosylation is present at Asn-115. A Peptidase S8 domain is found at 127–399; it reads SYGLGRISNK…NRLLYNNSGV (273 aa). Active-site charge relay system residues include Asp-159 and His-190. The N-linked (GlcNAc...) asparagine glycan is linked to Asn-251. The active-site Charge relay system is Ser-345. A glycan (N-linked (GlcNAc...) asparagine) is linked at Asn-395.

The protein belongs to the peptidase S8 family.

It is found in the secreted. In terms of biological role, secreted subtilisin-like serine protease with keratinolytic activity that contributes to pathogenicity. The protein is Subtilisin-like protease CPC735_033790 of Coccidioides posadasii (strain C735) (Valley fever fungus).